Consider the following 251-residue polypeptide: Metallo-beta-lactamase domain-containing protein 1 (251 aa).

Zn(2+) contacts are provided by His-118, His-120, Asp-122, His-123, His-173, Asp-196, and His-235.

It belongs to the metallo-beta-lactamase superfamily. Glyoxalase II family. In terms of assembly, homodimer. Zn(2+) serves as cofactor.

It localises to the cytoplasm. It is found in the cytosol. The protein localises to the nucleus. It catalyses the reaction a ribonucleotidyl-ribonucleotide-RNA + H2O = a 3'-end ribonucleotide-RNA + a 5'-end 5'-phospho-ribonucleoside-RNA + H(+). In terms of biological role, endoribonuclease that catalyzes the hydrolysis of histone-coding pre-mRNA 3'-end. Involved in histone pre-mRNA processing during the S-phase of the cell cycle, which is required for entering/progressing through S-phase. Cleaves histone pre-mRNA at a major and a minor cleavage site after the 5'-ACCCA-3' and the 5'-ACCCACA-3' sequence, respectively, and located downstream of the stem-loop. May require the presence of the HDE element located at the histone pre-RNA 3'-end to avoid non-specific cleavage. This chain is Metallo-beta-lactamase domain-containing protein 1 (Mblac1), found in Rattus norvegicus (Rat).